We begin with the raw amino-acid sequence, 534 residues long: Peptide chain release factor 3 (534 aa).

In terms of domain architecture, tr-type G spans 9 to 278; the sequence is ARRRTFAIIS…FFVEHAPPPQ (270 aa). GTP is bound by residues 18 to 25, 86 to 90, and 140 to 143; these read SHPDAGKT, DTPGH, and NKLD.

This sequence belongs to the TRAFAC class translation factor GTPase superfamily. Classic translation factor GTPase family. PrfC subfamily.

It localises to the cytoplasm. Increases the formation of ribosomal termination complexes and stimulates activities of RF-1 and RF-2. It binds guanine nucleotides and has strong preference for UGA stop codons. It may interact directly with the ribosome. The stimulation of RF-1 and RF-2 is significantly reduced by GTP and GDP, but not by GMP. The chain is Peptide chain release factor 3 from Xanthomonas axonopodis pv. citri (strain 306).